A 231-amino-acid polypeptide reads, in one-letter code: Aldehyde decarbonylase (231 aa).

Fe cation is bound by residues glutamate 32, glutamate 60, histidine 63, glutamate 115, and histidine 147.

Belongs to the aldehyde decarbonylase family. Binds 2 metal cations per subunit. The catalytic dinuclear metal-binding site could be either a di-iron or a manganese-iron cofactor. is required as a cofactor.

It catalyses the reaction a long-chain fatty aldehyde + 2 NADPH + O2 + H(+) = a long-chain alkane + formate + 2 NADP(+) + H2O. Its function is as follows. Catalyzes the decarbonylation of fatty aldehydes to alkanes. Requires the presence of ferredoxin, ferredoxin reductase and NADPH for in vitro decarbonylase activity. Involved in the biosynthesis of alkanes, mainly heptadecane and pentadecane. This is Aldehyde decarbonylase from Synechococcus elongatus (strain ATCC 33912 / PCC 7942 / FACHB-805) (Anacystis nidulans R2).